Consider the following 243-residue polypeptide: Transcription factor TCP6 (243 aa).

The disordered stretch occupies residues 1 to 55 (MVMEPKKNQNLPSFLNPSRQNQDNDKKRKQTEVKGFDIVVGEKRKKKENEEEDQE). Residues 8–21 (NQNLPSFLNPSRQN) are compositionally biased toward polar residues. Residues 22-35 (QDNDKKRKQTEVKG) are compositionally biased toward basic and acidic residues. Residues 42–66 (EKRKKKENEEEDQEIQILYEKEKKK) are a coiled coil. One can recognise a TCP domain in the interval 68–122 (NKDRHLKVEGRGRRVRLPPLCAARIYQLTKELGHKSDGETLEWLLQHAEPSILSA).

Interacts with SPL.

Its subcellular location is the nucleus. The sequence is that of Transcription factor TCP6 (TCP6) from Arabidopsis thaliana (Mouse-ear cress).